A 117-amino-acid polypeptide reads, in one-letter code: Photosystem II reaction center Psb28 protein (117 aa).

Belongs to the Psb28 family. Part of the photosystem II complex.

The protein resides in the cellular thylakoid membrane. The polypeptide is Photosystem II reaction center Psb28 protein (Prochlorococcus marinus (strain MIT 9312)).